Consider the following 475-residue polypeptide: Bifunctional aspartate aminotransferase and glutamate/aspartate-prephenate aminotransferase (475 aa).

Residues 1 to 55 constitute a chloroplast transit peptide; that stretch reads MASQSSVAVISSAAARGESFPDSKKPIGSVRFQQPLRLSFSYCKSGNMSSRICAM. Residues Gly-107, Trp-193, and Asn-243 each contribute to the L-aspartate site. Lys-306 bears the N6-(pyridoxal phosphate)lysine mark. L-aspartate is bound at residue Arg-445.

It belongs to the class-I pyridoxal-phosphate-dependent aminotransferase family. In terms of assembly, homodimer. Requires pyridoxal 5'-phosphate as cofactor.

Its subcellular location is the plastid. It is found in the chloroplast. The catalysed reaction is L-aspartate + 2-oxoglutarate = oxaloacetate + L-glutamate. It catalyses the reaction L-arogenate + oxaloacetate = prephenate + L-aspartate. It carries out the reaction L-arogenate + 2-oxoglutarate = prephenate + L-glutamate. It participates in amino-acid biosynthesis; L-phenylalanine biosynthesis; L-arogenate from prephenate (L-Asp route): step 1/1. The protein operates within amino-acid biosynthesis; L-phenylalanine biosynthesis; L-arogenate from prephenate (L-Glu route): step 1/1. Functionally, prokaryotic-type aspartate aminotransferase. Also has a prenate transaminase activity. Involved in the aromatic amino acids biosynthesis pathway via the arogenate route. Required for the transamination of prephenate into arogenate. Required for early development of the embryo. The sequence is that of Bifunctional aspartate aminotransferase and glutamate/aspartate-prephenate aminotransferase (PAT) from Arabidopsis thaliana (Mouse-ear cress).